The chain runs to 143 residues: Putative protein FPV235 (143 aa).

The polypeptide is Putative protein FPV235 (Vertebrata (FPV)).